Reading from the N-terminus, the 448-residue chain is Glutamate--tRNA ligase (448 aa).

Residues 10 to 20 carry the 'HIGH' region motif; the sequence is PSPTGFLHIGN. The short motif at 214–218 is the 'KMSKS' region element; that stretch reads KLSKR. Residue Lys-217 coordinates ATP.

It belongs to the class-I aminoacyl-tRNA synthetase family. Glutamate--tRNA ligase type 1 subfamily. Monomer.

It is found in the cytoplasm. The catalysed reaction is tRNA(Glu) + L-glutamate + ATP = L-glutamyl-tRNA(Glu) + AMP + diphosphate. Functionally, catalyzes the attachment of glutamate to tRNA(Glu) in a two-step reaction: glutamate is first activated by ATP to form Glu-AMP and then transferred to the acceptor end of tRNA(Glu). This Phytoplasma australiense protein is Glutamate--tRNA ligase.